Reading from the N-terminus, the 2471-residue chain is Polyprotein P1234 (2471 aa).

The Alphavirus-like MT domain maps to 28–257; the sequence is EATQVTDNDH…EERILLRSWH (230 aa). Positions 242–261 are nsP1 membrane-binding; the sequence is GSTIYTEERILLRSWHLPNV. Cys-417 is lipidated: S-palmitoyl cysteine; by host. The 152-residue stretch at 688–839 folds into the (+)RNA virus helicase ATP-binding domain; the sequence is DLVDPPFHEF…HEICTEVYHK (152 aa). An a ribonucleoside 5'-triphosphate-binding site is contributed by 719–726; that stretch reads GVPGSGKS. The (+)RNA virus helicase C-terminal domain maps to 840–988; that stretch reads SISRRCTRTV…LEEWQAEHDA (149 aa). Positions 1001 to 1320 constitute a Peptidase C9 domain; the sequence is DVYQNKVHVC…VVLNNIYQGS (320 aa). Residues 1002–1021 are nucleolus localization signal; the sequence is VYQNKVHVCWAKALEPVLAT. Residue Cys-1010 is the For cysteine protease nsP2 activity of the active site. Residues 1054–1063 carry the Nuclear export signal motif; sequence TRFFGVDIDS. His-1079 serves as the catalytic For cysteine protease nsP2 activity. The Nuclear localization signal motif lies at 1177-1181; sequence PGKRV. The 159-residue stretch at 1328–1486 folds into the Macro domain; the sequence is APAYRVIRGD…RIKDAIARKE (159 aa). The ADP-D-ribose site is built by Asp-1337, Asn-1351, Gly-1359, Gly-1438, Val-1439, and Tyr-1440. Cys-1589, Cys-1591, Cys-1614, and Cys-1632 together coordinate Zn(2+). Residues 1669 to 1692 are disordered; it reads RRPAPPVPVPARIPSPRCSPAVSM. The span at 1670-1681 shows a compositional bias: pro residues; sequence RPAPPVPVPARI. The segment at 1771–1783 is binding to host G3BP family members; sequence LITFDSVTDIFEN. Positions 1798–1838 are disordered; it reads IPAPRRRREPETDIQRFDKSEEKPVPKPRTRTAKYKKPPGV. The segment covering 1805 to 1822 has biased composition (basic and acidic residues); the sequence is REPETDIQRFDKSEEKPV. The segment covering 1823–1834 has biased composition (basic residues); that stretch reads PKPRTRTAKYKK. The binding to host FXR family members stretch occupies residues 1835–1851; sequence PPGVARSISEAELDEFI. Positions 2228–2343 constitute a RdRp catalytic domain; it reads DAVLETDIAS…KGVKSDALMA (116 aa).

In terms of assembly, interacts with non-structural protein 3. Interacts with RNA-directed RNA polymerase nsP4. Interacts with protease nsP2. interacts with itself. As to quaternary structure, interacts with mRNA-capping enzyme nsP1. Interacts with host DDX1. Interacts with host DDX3. Interacts (via C-terminus) with host FXR1; this interaction inhibits the formation of host stress granules on viral mRNAs and the nsp3-FXR1 complexes bind viral RNAs and probably orchestrate the assembly of viral replication complexes. Interacts (via C-terminus) with host FXR2; this interaction inhibits the formation of host stress granules on viral mRNAs and the nsp3-FXR2 complexes bind viral RNAs and probably orchestrate the assembly of viral replication complexes. Interacts (via C-terminus) with host FMR1; this interaction inhibits the formation of host stress granules on viral mRNAs and the nsp3-FMR1 complexes bind viral RNAs and probably orchestrate the assembly of viral replication complexes. Interacts (via C-terminus) with host G3BP1; this interaction inhibits the formation of host stress granules on viral mRNAs and the nsp3-G3BP1 complexes bind viral RNAs and probably orchestrate the assembly of viral replication complexes. Interacts (via C-terminus) with host G3BP2; this interaction inhibits the formation of host stress granules on viral mRNAs and the nsp3-G3BP2 complexes bind viral RNAs and probably orchestrate the assembly of viral replication complexes. Interacts with mRNA-capping enzyme nsP1. Interacts with protease nsP2. interacts with itself. In terms of assembly, interacts with RNA-directed RNA polymerase nsP4. Interacts with mRNA-capping enzyme nsP1. Interacts with KPNA1/karyopherin-alpha1; this interaction probably allows the active transport of protease nsP2 into the host nucleus. It depends on Mg(2+) as a cofactor. The cofactor is Mn(2+). Post-translationally, specific enzymatic cleavages in vivo yield mature proteins. The processing of the polyprotein is temporally regulated. In early stages (1.7 hpi), P1234 is first cleaved in trans through its nsP2 protease activity, releasing P123' and nsP4, which associate to form the early replication complex. At the same time, P1234 is also cut at the nsP1/nsP2 site early in infection but with lower efficiency. After replication of the viral minus-strand RNAs (4 hpi), the polyproteins are cut at the nsP1/nsP2 and nsP2/nsP3 sites very efficiently, preventing accumulation of P123' and P1234 and allowing the formation of the late replication complex. NsP3'/nsP4 site is not cleaved anymore and P34 is produced rather than nsP4. In terms of processing, specific enzymatic cleavages in vivo yield mature proteins. The processing of the polyprotein is temporally regulated. In early stages (1.7 hpi), P123 is cleaved at the nsP1/nsP2 site with low efficiency. After replication of the viral minus-strand RNAs (4 hpi), the polyproteins are cut at the nsP1/nsP2 and nsP2/nsP3 sites very efficiently, preventing accumulation of P123 and allowing the formation of the late replication complex. Specific enzymatic cleavages in vivo yield mature proteins. The processing of the polyprotein is temporally regulated. In early stages (1.7 hpi), P123' is cleaved at the nsP1/nsP2 site with low efficiency. After replication of the viral minus-strand RNAs (4 hpi), the polyproteins are cut at the nsP1/nsP2 and nsP2/nsP3 sites very efficiently, preventing accumulation of P123' and allowing the formation of the late replication complex. Post-translationally, palmitoylated by host palmitoyltransferases ZDHHC2 and ZDHHC19. In terms of processing, phosphorylated by host on serines and threonines. Ubiquitinated; targets the protein for rapid degradation via the ubiquitin system. Nsp4 is present in extremely low quantities due to low frequency of translation through the amber stop-codon and the degradation by the ubiquitin pathway.

The protein resides in the host cytoplasmic vesicle membrane. Its subcellular location is the host cell membrane. It localises to the host cell projection. The protein localises to the host filopodium. It is found in the host nucleus. The protein resides in the host cytoplasm. The catalysed reaction is GTP + S-adenosyl-L-methionine = N(7)-methyl-GTP + S-adenosyl-L-homocysteine. The enzyme catalyses N(7)-methyl-GTP + L-histidyl-[protein] = N(tele)-(N(7)-methylguanosine 5'-phospho)-L-histidyl-[protein] + diphosphate. It carries out the reaction N(tele)-(N(7)-methylguanosine 5'-phospho)-L-histidyl-[protein] + a 5'-end diphospho-(purine-ribonucleoside) in mRNA + H(+) = a 5'-end (N(7)-methyl 5'-triphosphoguanosine)-(purine-ribonucleoside) in mRNA + L-histidyl-[protein]. It catalyses the reaction a 5'-end triphospho-ribonucleoside in mRNA + H2O = a 5'-end diphospho-ribonucleoside in mRNA + phosphate + H(+). The catalysed reaction is a ribonucleoside 5'-triphosphate + H2O = a ribonucleoside 5'-diphosphate + phosphate + H(+). The enzyme catalyses ATP + H2O = ADP + phosphate + H(+). It carries out the reaction RNA(n) + a ribonucleoside 5'-triphosphate = RNA(n+1) + diphosphate. It catalyses the reaction 4-O-(ADP-D-ribosyl)-L-aspartyl-[protein] + H2O = L-aspartyl-[protein] + ADP-D-ribose + H(+). The catalysed reaction is 5-O-(ADP-D-ribosyl)-L-glutamyl-[protein] + H2O = L-glutamyl-[protein] + ADP-D-ribose + H(+). The enzyme catalyses RNA(n) + ATP = RNA(n)-3'-adenine ribonucleotide + diphosphate. It carries out the reaction ADP-alpha-D-ribose 1''-phosphate + H2O = ADP-D-ribose + phosphate. Its activity is regulated as follows. Inhibited by sinefungin. Its function is as follows. Inactive precursor of the viral replicase, which is activated by cleavages carried out by the viral protease nsP2. Functionally, the early replication complex formed by the polyprotein P123 and nsP4 synthesizes the minus-strand RNAs (antigenome). Polyprotein P123 is a short-lived polyprotein that accumulates during early stage of infection. As soon P123 is cleaved into mature proteins, the plus-strand RNAs synthesis begins. The early replication complex formed by the polyprotein P123' and nsP4 synthesizes minus-strand RNAs (antigenome). Polyprotein P123' is a short-lived polyprotein that accumulates during early stage of infection. As soon P123' is cleaved into mature proteins, the plus-strand RNAs synthesis begins. In terms of biological role, cytoplasmic capping enzyme that catalyzes two virus-specific reactions: methyltransferase and nsP1 guanylyltransferase. mRNA-capping is necessary since all viral RNAs are synthesized in the cytoplasm, and host capping enzymes are restricted to the nucleus. The enzymatic reaction involves a covalent link between 7-methyl-GMP and nsP1, whereas eukaryotic capping enzymes form a covalent complex only with GMP. NsP1 capping consists in the following reactions: GTP is first methylated into 7-methyl-GMP and then is covalently linked to nsP1 to form the m7GMp-nsP1 complex from which 7-methyl-GMP complex is transferred to the mRNA to create the cap structure. NsP1 is also needed for the initiation of the minus-strand RNAs synthesis. Probably serves as a membrane anchor for the replication complex composed of nsP1-nsP4. Nsp1 is needed for the initiation of the minus-strand RNAs synthesis. Palmitoylated nsP1 is remodeling host cell cytoskeleton, and induces filopodium-like structure formation at the surface of the host cell. Its function is as follows. Multifunctional protein whose N-terminus is part of the RNA polymerase complex and displays NTPase, RNA triphosphatase and helicase activities. NTPase and RNA triphosphatase are involved in viral RNA capping and helicase keeps a check on the dsRNA replication intermediates. The C-terminus harbors a protease that specifically cleaves the polyproteins and releases the mature proteins. Required for the shutoff of minus-strand RNAs synthesis. Inhibits host translation to ensure maximal viral gene expression and evade host immune response. Functionally, seems to be essential for minus-strand RNAs and subgenomic 26S mRNAs synthesis. Displays mono-ADP-ribosylhydrolase activity. ADP-ribosylation is a post-translational modification that controls various processes of the host cell and the virus probably needs to revert it for optimal viral replication. Binds proteins of FXR and G3BP families and sequesters them into the viral RNA replication complexes thereby inhibiting the formation of host stress granules on viral mRNAs. The nsp3-FXR and nsp3-G3BP complexes bind viral RNAs and probably orchestrate the assembly of viral replication complexes, thanks to the ability of G3BP and FXR family members to self-assemble and bind DNA. Seems to be essential for minus-strand RNAs and subgenomic 26S mRNAs synthesis. Displays mono-ADP-ribosylhydrolase activity. ADP-ribosylation is a post-translational modification that controls various processes of the host cell and the virus probably needs to revert it for optimal viral replication. Binds proteins of FXR and G3BP families and sequesters them into the viral RNA replication complexes thereby inhibiting the formation of host stress granules on viral mRNAs. The nsp3'-FXR and nsp3-G3BP complexes bind viral RNAs and probably orchestrate the assembly of viral replication complexes, thanks to the ability of G3BP and FXR family members to self-assemble and bind DNA. In terms of biological role, RNA dependent RNA polymerase. Replicates genomic and antigenomic RNA by recognizing replications specific signals. The early replication complex formed by the polyprotein P123 and nsP4 synthesizes minus-strand RNAs. The late replication complex composed of fully processed nsP1-nsP4 is responsible for the production of genomic and subgenomic plus-strand RNAs. In Eastern equine encephalitis virus (strain PE-0.0155) (EEEV), this protein is Polyprotein P1234.